We begin with the raw amino-acid sequence, 201 residues long: Ras-related protein Rab-1B (201 aa).

Residue methionine 1 is modified to N-acetylmethionine. Positions 17, 18, 19, 20, 21, 22, 23, 33, 34, 35, 36, 39, and 40 each coordinate GTP. Residue serine 22 coordinates Mg(2+). The Switch 1 motif lies at 30-45; sequence DDTYTESYISTIGVDF. Mg(2+) contacts are provided by threonine 40 and aspartate 63. A switch 2 region; required for interaction with REP1/CHM region spans residues 64–83; the sequence is TAGQERGRTITSSYYRGAHG. The Switch 2 motif lies at 65–80; that stretch reads AGQERGRTITSSYYRG. Residues glycine 66, asparagine 121, lysine 122, aspartate 124, serine 151, alanine 152, and lysine 153 each contribute to the GTP site. The interval 173–201 is disordered; it reads MGPGAASGGERPNLKIDSTPVKQAGGGCC. S-geranylgeranyl cysteine attachment occurs at residues cysteine 200 and cysteine 201. Residue cysteine 201 is modified to Cysteine methyl ester.

It belongs to the small GTPase superfamily. Rab family. As to quaternary structure, interacts with MICAL1 and MICAL2. Interacts (in GTP-bound form) with MICALCL, MICAL1 and MILCAL3. Interacts with GDI1; the interaction requires the GDP-bound state. Interacts with CHM/REP1; the interaction requires the GDP-bound form and is necessary for prenylation by GGTase II. Interacts with RabGAP TBC1D20. Interacts (in GDP-bound form) with lipid phosphatase MTMR6 (via GRAM domain); the interaction regulates MTMR6 recruitment to the endoplasmic reticulum-Golgi intermediate compartment. Interacts (in GDP-bound form) with lipid phosphatase MTMR7. It depends on Mg(2+) as a cofactor. In terms of processing, prenylated; by GGTase II, only after interaction of the substrate with Rab escort protein 1 (REP1).

The protein resides in the cytoplasm. Its subcellular location is the membrane. It localises to the preautophagosomal structure membrane. It is found in the perinuclear region. The enzyme catalyses GTP + H2O = GDP + phosphate + H(+). Regulated by guanine nucleotide exchange factors (GEFs) which promote the exchange of bound GDP for free GTP. Regulated by GTPase activating proteins (GAPs) including TBC1D20 which increases the GTP hydrolysis activity. Inhibited by GDP dissociation inhibitors (GDIs). Its function is as follows. The small GTPases Rab are key regulators of intracellular membrane trafficking, from the formation of transport vesicles to their fusion with membranes. Rabs cycle between an inactive GDP-bound form and an active GTP-bound form that is able to recruit to membranes different set of downstream effectors directly responsible for vesicle formation, movement, tethering and fusion. Plays a role in the initial events of the autophagic vacuole development which take place at specialized regions of the endoplasmic reticulum. Regulates vesicular transport between the endoplasmic reticulum and successive Golgi compartments. Required to modulate the compacted morphology of the Golgi. Promotes the recruitment of lipid phosphatase MTMR6 to the endoplasmic reticulum-Golgi intermediate compartment. The chain is Ras-related protein Rab-1B (RAB1B) from Sus scrofa (Pig).